The chain runs to 621 residues: MATYETQGFKLNDSGRRIIVDPVTRIEGHMRCEVNLDANNVIRNAVSTGTMWRGLEVILKRADPADAWAFVERICRVCTGCHALASVRAVEDALGIKIPKNAHLIREMMAKTLQVHDHVVHFYHLHALDWVDVVSALNADPKRTSALQQTVSPAHPLSSPGYFRDVQIRLKKFVESGQLGPFMNGYWGNPAYKLPPEANLMAVTHYLEALDLQKEWVKIHTIFGGKNPHPNYLVGGMPCVDSNLDGSGAAGAPLNMERLNFVRARIEEAIEFVKNVYLPDVLAIGTIYKDAGWLYGGGLSALNVMDYGTYPRVNYDPTTDQLPGGAILNGNWDEIFPVDPRDPEQVQEFVAHSWYKYADETKGLHPWDGVTEPNFVLGPKAVGTPTDIKQLDEDAKYSWIKVAALAGHAMEVGPLVALHPRIRARAEDPKSYRAHYLREQVENSARAINTGIPQALGLKQTDYTVKQLLPTTIGRTLARALEAQYCGNMMLDDWHEMMANIKAGDLTTANVDKWEPSAWPKEAKGVGHVAAPRGACGHWIRIKDGKIENYQCVVPTTWNGSPRDSKGQIGAFEASLMNTPMAKPEEPVEILRTVHSFDPCLACSTHVIRPDGQERVVVKVR.

The Ni(2+) site is built by Cys-75, Cys-78, Cys-600, and Cys-603.

It belongs to the [NiFe]/[NiFeSe] hydrogenase large subunit family. Heterodimer of a large and a small subunit. Ni(2+) serves as cofactor.

The protein resides in the cell membrane. The enzyme catalyses H2 + A = AH2. In terms of biological role, this enzyme recycles the H(2) produced by nitrogenase to increase the production of ATP and to protect nitrogenase against inhibition or damage by O(2) under carbon- or phosphate-limited conditions. This Alcaligenes hydrogenophilus protein is Uptake hydrogenase large subunit (hupL).